The following is a 548-amino-acid chain: Glucan endo-1,3-beta-glucosidase (548 aa).

Positions 1 to 36 (MPHDRKNSSRRAWAALCAAVLAVSGALVGVAAPASA) form a signal peptide, tat-type signal. In terms of domain architecture, GH64 spans 38–396 (PATIPLTITN…PQAAYIKLDP (359 aa)). Glu-153 (proton donor) is an active-site residue. Asp-169 acts as the Proton acceptor in catalysis. Residues 422 to 548 (GTGALRIGST…NQTEAQRWTL (127 aa)) form the Ricin B-type lectin domain.

The protein belongs to the glycosyl hydrolase 64 family. Predicted to be exported by the Tat system. The position of the signal peptide cleavage has not been experimentally proven.

The protein localises to the periplasm. The enzyme catalyses Hydrolysis of (1-&gt;3)-beta-D-glucosidic linkages in (1-&gt;3)-beta-D-glucans.. Functionally, lysis of cellular walls containing beta-1,3-glucans. Implicated in the defense against fungal pathogens. The protein is Glucan endo-1,3-beta-glucosidase (glcI) of Arthrobacter sp. (strain YCWD3).